The following is a 271-amino-acid chain: uncharacterized protein (271 aa).

Residues 77–205 form the DOD-type homing endonuclease domain; it reads IIGVYFGDAN…SKELLKKLDV (129 aa).

This is an uncharacterized protein from Methanocaldococcus jannaschii (strain ATCC 43067 / DSM 2661 / JAL-1 / JCM 10045 / NBRC 100440) (Methanococcus jannaschii).